We begin with the raw amino-acid sequence, 501 residues long: Dipeptide and tripeptide permease A (501 aa).

Residues 1 to 34 are Cytoplasmic-facing; it reads MSTANNKPTESVSLNAFKQPKSFYLIFSIELWER. The helical transmembrane segment at 35 to 55 threads the bilayer; it reads FGYYGLQGIMAVYLVKQLGMS. The Periplasmic segment spans residues 56–59; sequence EADS. The helical transmembrane segment at 60 to 80 threads the bilayer; sequence ITLFSSFSALVYGLVAIGGWL. Residues 81-89 lie on the Cytoplasmic side of the membrane; sequence GDKVLGTKR. A helical membrane pass occupies residues 90-110; it reads VIMLGAIVLAIGYGLVAWSGH. Position 111 (D111) is a topological domain, periplasmic. The chain crosses the membrane as a helical span at residues 112 to 132; sequence VAIVYMGMATIAVGNGLFKAN. The Cytoplasmic segment spans residues 133-153; that stretch reads PSSLLSTCYAKDDPRLDGAFT. A helical transmembrane segment spans residues 154-174; the sequence is MYYMSINIGSFFSMLATPWLA. At 175 to 178 the chain is on the periplasmic side; sequence AKFG. Residues 179 to 199 form a helical membrane-spanning segment; it reads WSVAFALSFVGMLITVVNFLF. The Cytoplasmic segment spans residues 200 to 217; sequence CRSWVKDYGSKPDFEAVH. The helical transmembrane segment at 218–238 threads the bilayer; that stretch reads FGKLLATIAGVIVLIAIATWL. At 239–246 the chain is on the periplasmic side; it reads LHNQGIAR. The helical transmembrane segment at 247–267 threads the bilayer; that stretch reads MVLGVIALGIVIIFGKEAFAM. Topologically, residues 268–274 are cytoplasmic; the sequence is QGAARRK. Residues 275–295 traverse the membrane as a helical segment; it reads MIVAFILMLEAIIFFVLYSQM. Residues 296–320 are Periplasmic-facing; that stretch reads PTSLNFFAIRNVEHTILGIAVEPEQ. The helical transmembrane segment at 321 to 341 threads the bilayer; the sequence is YQALNPFWIIIGSPILAAIYN. The Cytoplasmic portion of the chain corresponds to 342–352; it reads KMGDTLPMPTK. Residues 353–373 form a helical membrane-spanning segment; sequence FAIGMVLCSGAFLVLPLGAKF. The Periplasmic portion of the chain corresponds to 374-383; sequence ATDAGIVSVN. Residues 384–404 form a helical membrane-spanning segment; that stretch reads WLILSYGLQSIGELMISGLGL. At 405–414 the chain is on the cytoplasmic side; it reads AMVAQLVPQR. A helical transmembrane segment spans residues 415–435; that stretch reads LMGFIMGSWFLTTAGANLIGG. The Periplasmic segment spans residues 436–459; that stretch reads YVAGMMAVPENVTDPLMSLEVYGR. The helical transmembrane segment at 460–480 threads the bilayer; the sequence is VFLQIGVATAVIAALMLITAP. Residues 481 to 501 lie on the Cytoplasmic side of the membrane; that stretch reads KLNRMTQDDEENAKAAKTATA.

This sequence belongs to the major facilitator superfamily. Proton-dependent oligopeptide transporter (POT/PTR) (TC 2.A.17) family. DtpA subfamily.

Its subcellular location is the cell inner membrane. Proton-dependent permease that transports di- and tripeptides. This chain is Dipeptide and tripeptide permease A, found in Citrobacter koseri (strain ATCC BAA-895 / CDC 4225-83 / SGSC4696).